The following is a 95-amino-acid chain: Aspartyl/glutamyl-tRNA(Asn/Gln) amidotransferase subunit C (95 aa).

This sequence belongs to the GatC family. Heterotrimer of A, B and C subunits.

The catalysed reaction is L-glutamyl-tRNA(Gln) + L-glutamine + ATP + H2O = L-glutaminyl-tRNA(Gln) + L-glutamate + ADP + phosphate + H(+). It carries out the reaction L-aspartyl-tRNA(Asn) + L-glutamine + ATP + H2O = L-asparaginyl-tRNA(Asn) + L-glutamate + ADP + phosphate + 2 H(+). In terms of biological role, allows the formation of correctly charged Asn-tRNA(Asn) or Gln-tRNA(Gln) through the transamidation of misacylated Asp-tRNA(Asn) or Glu-tRNA(Gln) in organisms which lack either or both of asparaginyl-tRNA or glutaminyl-tRNA synthetases. The reaction takes place in the presence of glutamine and ATP through an activated phospho-Asp-tRNA(Asn) or phospho-Glu-tRNA(Gln). The sequence is that of Aspartyl/glutamyl-tRNA(Asn/Gln) amidotransferase subunit C from Thermoanaerobacter pseudethanolicus (strain ATCC 33223 / 39E) (Clostridium thermohydrosulfuricum).